The sequence spans 702 residues: Elongation factor G (702 aa).

Positions 8–286 (DKVRNIGIIA…AVVEYLPSPL (279 aa)) constitute a tr-type G domain. Residues 17 to 24 (AHIDAGKT), 85 to 89 (DTPGH), and 139 to 142 (NKMD) each bind GTP.

The protein belongs to the TRAFAC class translation factor GTPase superfamily. Classic translation factor GTPase family. EF-G/EF-2 subfamily.

The protein resides in the cytoplasm. In terms of biological role, catalyzes the GTP-dependent ribosomal translocation step during translation elongation. During this step, the ribosome changes from the pre-translocational (PRE) to the post-translocational (POST) state as the newly formed A-site-bound peptidyl-tRNA and P-site-bound deacylated tRNA move to the P and E sites, respectively. Catalyzes the coordinated movement of the two tRNA molecules, the mRNA and conformational changes in the ribosome. In Chloroflexus aurantiacus (strain ATCC 29366 / DSM 635 / J-10-fl), this protein is Elongation factor G.